Consider the following 230-residue polypeptide: Ribose-5-phosphate isomerase A (230 aa).

Residues 29–32 (TGST), 85–88 (DGAD), and 98–101 (KGGG) each bind substrate. Glu-107 acts as the Proton acceptor in catalysis. Residue Lys-125 participates in substrate binding.

It belongs to the ribose 5-phosphate isomerase family. Homodimer.

It catalyses the reaction aldehydo-D-ribose 5-phosphate = D-ribulose 5-phosphate. Its pathway is carbohydrate degradation; pentose phosphate pathway; D-ribose 5-phosphate from D-ribulose 5-phosphate (non-oxidative stage): step 1/1. Its function is as follows. Catalyzes the reversible conversion of ribose-5-phosphate to ribulose 5-phosphate. The chain is Ribose-5-phosphate isomerase A from Staphylococcus epidermidis (strain ATCC 35984 / DSM 28319 / BCRC 17069 / CCUG 31568 / BM 3577 / RP62A).